A 349-amino-acid polypeptide reads, in one-letter code: Ribosomal RNA small subunit methyltransferase H (349 aa).

S-adenosyl-L-methionine contacts are provided by residues 34–36 (GGH), Asp-54, Phe-81, Asp-102, and Gln-109.

The protein belongs to the methyltransferase superfamily. RsmH family.

Its subcellular location is the cytoplasm. It catalyses the reaction cytidine(1402) in 16S rRNA + S-adenosyl-L-methionine = N(4)-methylcytidine(1402) in 16S rRNA + S-adenosyl-L-homocysteine + H(+). In terms of biological role, specifically methylates the N4 position of cytidine in position 1402 (C1402) of 16S rRNA. This chain is Ribosomal RNA small subunit methyltransferase H, found in Dehalococcoides mccartyi (strain ATCC BAA-2266 / KCTC 15142 / 195) (Dehalococcoides ethenogenes (strain 195)).